Reading from the N-terminus, the 608-residue chain is Albumin (608 aa).

The N-terminal stretch at 1–18 is a signal peptide; the sequence is MKWVTFISLLLLFSSAYS. A propeptide spanning residues 19–24 is cleaved from the precursor; the sequence is RGVTRR. 3 consecutive Albumin domains span residues 19–210, 211–403, and 404–601; these read RGVT…DALR, EKVL…EFKP, and LVEE…KLVA. Cu cation is bound at residue H27. S29 bears the Phosphoserine mark. Residues E30 and D37 each coordinate Ca(2+). A disulfide bridge connects residues C77 and C86. S82 and S89 each carry phosphoserine. H91 is a Zn(2+) binding site. 6 disulfides stabilise this stretch: C99–C115, C114–C125, C148–C193, C192–C201, C224–C270, and C269–C277. K229 is subject to N6-succinyllysine. Residue E268 participates in Ca(2+) binding. The Zn(2+) site is built by H271 and D273. Residues D273, E276, D279, and D283 each contribute to the Ca(2+) site. Cystine bridges form between C289/C303, C302/C313, C340/C385, C384/C393, C416/C462, C461/C472, C485/C501, and C500/C511. At S443 the chain carries Phosphoserine. T444 and T446 each carry phosphothreonine. An N6-succinyllysine modification is found at K460. S513 bears the Phosphoserine mark. Disulfide bonds link C538–C583 and C582–C591. At K558 the chain carries N6-methyllysine. Phosphothreonine is present on T570. K588 is subject to N6-succinyllysine.

The protein belongs to the ALB/AFP/VDB family. As to quaternary structure, interacts with FCGRT; this interaction regulates ALB homeostasis. Interacts with TASOR. In plasma, occurs in a covalently-linked complex with chromophore-bound alpha-1-microglobulin; this interaction does not prevent fatty acid binding to ALB. In terms of processing, phosphorylated by FAM20C in the extracellular medium. Plasma.

The protein localises to the secreted. Its function is as follows. Binds water, Ca(2+), Na(+), K(+), fatty acids, hormones, bilirubin and drugs. Its main function is the regulation of the colloidal osmotic pressure of blood. Major zinc transporter in plasma, typically binds about 80% of all plasma zinc. Major calcium and magnesium transporter in plasma, binds approximately 45% of circulating calcium and magnesium in plasma. Potentially has more than two calcium-binding sites and might additionally bind calcium in a non-specific manner. The shared binding site between zinc and calcium at residue Asp-273 suggests a crosstalk between zinc and calcium transport in the blood. The rank order of affinity is zinc &gt; calcium &gt; magnesium. Binds to the bacterial siderophore enterobactin and inhibits enterobactin-mediated iron uptake of E.coli from ferric transferrin, and may thereby limit the utilization of iron and growth of enteric bacteria such as E.coli. Does not prevent iron uptake by the bacterial siderophore aerobactin. The sequence is that of Albumin (ALB) from Felis catus (Cat).